Consider the following 70-residue polypeptide: Consomatin Mrc3 (70 aa).

A signal peptide spans 1–22 (MQTAYWVMVMMMVWITAPLSEG). Positions 23-55 (GKLNDVIRGLVPDDVTPKRILQSLISRRRFDGR) are excised as a propeptide. Cys62 and Cys67 are joined by a disulfide. Trp64 is subject to D-tryptophan. 4-hydroxyproline is present on Pro68. The residue at position 69 (Tyr69) is a Tyrosine amide.

It belongs to the conotoxin C superfamily. Consomatin family. In terms of tissue distribution, expressed by the venom duct.

It is found in the secreted. Functionally, moderately activates human somatostatin receptors (SSTR) with a preferential activation of SSTR1 and SSTR4. In vivo, does not cause behavioral changes in mice within a few minutes of intracranial injection, but causes a progressive loss of movement thereafter. Four to five hours after injection, mice recover, even with the highest dose tested. Shows antinociception and antihyperalgesia activities in two mouse models of acute pain, most probably by acting outside the central nervous system. In Conus mercator (Trader cone), this protein is Consomatin Mrc3.